Here is a 250-residue protein sequence, read N- to C-terminus: 5-oxoprolinase subunit A (250 aa).

Belongs to the LamB/PxpA family. As to quaternary structure, forms a complex composed of PxpA, PxpB and PxpC.

It carries out the reaction 5-oxo-L-proline + ATP + 2 H2O = L-glutamate + ADP + phosphate + H(+). Functionally, catalyzes the cleavage of 5-oxoproline to form L-glutamate coupled to the hydrolysis of ATP to ADP and inorganic phosphate. The polypeptide is 5-oxoprolinase subunit A (Paraburkholderia phytofirmans (strain DSM 17436 / LMG 22146 / PsJN) (Burkholderia phytofirmans)).